The following is a 508-amino-acid chain: Vacuolar serine-type carboxypeptidase ATG42 (508 aa).

The N-terminal stretch at 1–24 is a signal peptide; it reads MKYLNLVFVLQLLISIKYASFGRA. Cystine bridges form between Cys132–Cys375, Cys267–Cys281, Cys291–Cys314, Cys298–Cys307, and Cys336–Cys345. Residue Asn163 is glycosylated (N-linked (GlcNAc...) asparagine). Residue Ser219 is part of the active site. Asn242 carries an N-linked (GlcNAc...) asparagine glycan. Residues Asn339 and Asn371 are each glycosylated (N-linked (GlcNAc...) asparagine). Residue Asp415 is part of the active site. A substrate-binding site is contributed by Cys418. The active site involves His474. Met475 contributes to the substrate binding site.

Belongs to the peptidase S10 family.

It localises to the vacuole lumen. The catalysed reaction is Release of a C-terminal amino acid with broad specificity.. Vacuolar serine-type carboxypeptidase involved in vacuolar zymogen activation, breakdown of the autophagic body, and autophagosome-dependent protein synthesis. Plays a key role in phytochelatin (PC) synthesis from glutathione (GSH) by cleaving the Gly from GSH and form the PC-peptides of the structure (gamma-Glu-Cys)2-Gly. Also involved in resistance to xenobiotics via the degradation of glutathione-S-conjugates. The polypeptide is Vacuolar serine-type carboxypeptidase ATG42 (Saccharomyces cerevisiae (strain ATCC 204508 / S288c) (Baker's yeast)).